We begin with the raw amino-acid sequence, 1184 residues long: DNA-directed RNA polymerase subunit beta' (1184 aa).

4 residues coordinate Zn(2+): Cys-60, Cys-62, Cys-75, and Cys-78. Mg(2+)-binding residues include Asp-449, Asp-451, and Asp-453. Zn(2+) contacts are provided by Cys-794, Cys-867, Cys-874, and Cys-877.

Belongs to the RNA polymerase beta' chain family. In terms of assembly, the RNAP catalytic core consists of 2 alpha, 1 beta, 1 beta' and 1 omega subunit. When a sigma factor is associated with the core the holoenzyme is formed, which can initiate transcription. Requires Mg(2+) as cofactor. The cofactor is Zn(2+).

The enzyme catalyses RNA(n) + a ribonucleoside 5'-triphosphate = RNA(n+1) + diphosphate. Functionally, DNA-dependent RNA polymerase catalyzes the transcription of DNA into RNA using the four ribonucleoside triphosphates as substrates. In Thermoanaerobacter sp. (strain X514), this protein is DNA-directed RNA polymerase subunit beta'.